Consider the following 297-residue polypeptide: Protoheme IX farnesyltransferase 1 (297 aa).

The next 9 membrane-spanning stretches (helical) occupy residues 23-43, 45-65, 93-113, 117-137, 145-165, 171-191, 216-236, 241-261, and 277-297; these read VVVL…RAGV, WSVL…AAVV, LPAL…LLVF, LTAW…TGFL, IVIG…AVSG, PLLL…ALAI, LHIL…YAIH, LYLA…WVLY, and IGYL…LLSL.

Belongs to the UbiA prenyltransferase family. Protoheme IX farnesyltransferase subfamily.

The protein localises to the cell inner membrane. It catalyses the reaction heme b + (2E,6E)-farnesyl diphosphate + H2O = Fe(II)-heme o + diphosphate. The protein operates within porphyrin-containing compound metabolism; heme O biosynthesis; heme O from protoheme: step 1/1. Functionally, converts heme B (protoheme IX) to heme O by substitution of the vinyl group on carbon 2 of heme B porphyrin ring with a hydroxyethyl farnesyl side group. This chain is Protoheme IX farnesyltransferase 1, found in Pseudomonas putida (strain ATCC 700007 / DSM 6899 / JCM 31910 / BCRC 17059 / LMG 24140 / F1).